A 546-amino-acid chain; its full sequence is Cytochrome P450 monooxygenase alnH (546 aa).

Residues 11 to 31 (VPYSVPLLGSTVVILIGFIAI) traverse the membrane as a helical segment. 3 N-linked (GlcNAc...) asparagine glycosylation sites follow: Asn-146, Asn-258, and Asn-425. A heme-binding site is contributed by Cys-445.

The protein belongs to the cytochrome P450 family. Heme serves as cofactor.

It is found in the membrane. It functions in the pathway polyketide biosynthesis. In terms of biological role, cytochrome P450 monooxygenase; part of the gene cluster that mediates the biosynthesis of asperlin, a polyketide showing anti-inflammatory, antitumor and antibiotic activities. The first step of the asperlin biosynthesis is the production of the intermediate 2,4,6-octatrienoic acid by the highly redusing polyketide synthase alnA with cleavage of the PKS product by the esterase alnB. 2,4,6-octatrienoic acid is further converted to asperlin via several steps involving the remaining enzymes from the cluster. The polypeptide is Cytochrome P450 monooxygenase alnH (Emericella nidulans (strain FGSC A4 / ATCC 38163 / CBS 112.46 / NRRL 194 / M139) (Aspergillus nidulans)).